The chain runs to 49 residues: Large ribosomal subunit protein bL32 (49 aa).

It belongs to the bacterial ribosomal protein bL32 family.

In Nautilia profundicola (strain ATCC BAA-1463 / DSM 18972 / AmH), this protein is Large ribosomal subunit protein bL32.